The primary structure comprises 179 residues: MQEYLEKRYALALYEIAEKNNKVDEYLRDLTDICDIFDENKEFYEVINHPKINTAKKKQLFTDLFKGKIDEELLSFMMILIEKDRILQLREILDQMEKIDLERRNTIRGIVKTVVPLLDEELEQLKAIFEKKYEKNILFDTKIDKSLLGGVYVKVGNDIIDGTIKSKVEEMKELMLKKE.

The protein belongs to the ATPase delta chain family. As to quaternary structure, F-type ATPases have 2 components, F(1) - the catalytic core - and F(0) - the membrane proton channel. F(1) has five subunits: alpha(3), beta(3), gamma(1), delta(1), epsilon(1). F(0) has three main subunits: a(1), b(2) and c(10-14). The alpha and beta chains form an alternating ring which encloses part of the gamma chain. F(1) is attached to F(0) by a central stalk formed by the gamma and epsilon chains, while a peripheral stalk is formed by the delta and b chains.

It localises to the cell membrane. In terms of biological role, f(1)F(0) ATP synthase produces ATP from ADP in the presence of a proton or sodium gradient. F-type ATPases consist of two structural domains, F(1) containing the extramembraneous catalytic core and F(0) containing the membrane proton channel, linked together by a central stalk and a peripheral stalk. During catalysis, ATP synthesis in the catalytic domain of F(1) is coupled via a rotary mechanism of the central stalk subunits to proton translocation. Functionally, this protein is part of the stalk that links CF(0) to CF(1). It either transmits conformational changes from CF(0) to CF(1) or is implicated in proton conduction. This is ATP synthase subunit delta from Clostridium beijerinckii (strain ATCC 51743 / NCIMB 8052) (Clostridium acetobutylicum).